Here is a 213-residue protein sequence, read N- to C-terminus: 3-isopropylmalate dehydratase small subunit (213 aa).

The protein belongs to the LeuD family. LeuD type 1 subfamily. In terms of assembly, heterodimer of LeuC and LeuD.

The enzyme catalyses (2R,3S)-3-isopropylmalate = (2S)-2-isopropylmalate. It participates in amino-acid biosynthesis; L-leucine biosynthesis; L-leucine from 3-methyl-2-oxobutanoate: step 2/4. Catalyzes the isomerization between 2-isopropylmalate and 3-isopropylmalate, via the formation of 2-isopropylmaleate. This Neisseria meningitidis serogroup A / serotype 4A (strain DSM 15465 / Z2491) protein is 3-isopropylmalate dehydratase small subunit.